The chain runs to 289 residues: 4-diphosphocytidyl-2-C-methyl-D-erythritol kinase (289 aa).

Residue lysine 10 is part of the active site. Residue 94-104 (PVAAGLAGGSS) participates in ATP binding. Residue aspartate 136 is part of the active site.

It belongs to the GHMP kinase family. IspE subfamily.

The catalysed reaction is 4-CDP-2-C-methyl-D-erythritol + ATP = 4-CDP-2-C-methyl-D-erythritol 2-phosphate + ADP + H(+). The protein operates within isoprenoid biosynthesis; isopentenyl diphosphate biosynthesis via DXP pathway; isopentenyl diphosphate from 1-deoxy-D-xylulose 5-phosphate: step 3/6. Catalyzes the phosphorylation of the position 2 hydroxy group of 4-diphosphocytidyl-2C-methyl-D-erythritol. This chain is 4-diphosphocytidyl-2-C-methyl-D-erythritol kinase, found in Bacillus anthracis.